The following is a 98-amino-acid chain: NADH-ubiquinone oxidoreductase chain 4L (98 aa).

The next 3 membrane-spanning stretches (helical) occupy residues 1 to 21 (MSMM…GLLM), 29 to 49 (SLLC…VTIL), and 61 to 81 (IILL…LVMV).

Belongs to the complex I subunit 4L family. In terms of assembly, core subunit of respiratory chain NADH dehydrogenase (Complex I) which is composed of 45 different subunits.

It localises to the mitochondrion inner membrane. It carries out the reaction a ubiquinone + NADH + 5 H(+)(in) = a ubiquinol + NAD(+) + 4 H(+)(out). Functionally, core subunit of the mitochondrial membrane respiratory chain NADH dehydrogenase (Complex I) which catalyzes electron transfer from NADH through the respiratory chain, using ubiquinone as an electron acceptor. Part of the enzyme membrane arm which is embedded in the lipid bilayer and involved in proton translocation. The chain is NADH-ubiquinone oxidoreductase chain 4L (MT-ND4L) from Zalophus californianus (California sealion).